A 353-amino-acid polypeptide reads, in one-letter code: Rhodopsin (353 aa).

Over 1 to 36 (MNGTEGPYFYVPMVNTSGIVRSPYEYPQYYLVNPAA) the chain is Extracellular. 2 N-linked (GlcNAc...) asparagine glycosylation sites follow: Asn2 and Asn15. The helical transmembrane segment at 37-61 (YAALGAYMFLLILVGFPINFLTLYV) threads the bilayer. Over 62-73 (TIEHKKLRTPLN) the chain is Cytoplasmic. Residues 74–96 (YILLNLAVADLFMVFGGFTTTMY) traverse the membrane as a helical segment. Topologically, residues 97 to 110 (TSMHGYFVLGRLGC) are extracellular. An intrachain disulfide couples Cys110 to Cys187. The chain crosses the membrane as a helical span at residues 111 to 133 (NIEGFFATLGGEIALWSLVVLAI). Residues 134-136 (ERW) carry the 'Ionic lock' involved in activated form stabilization motif. Residues 134–152 (ERWVVVCKPISNFRFGENH) are Cytoplasmic-facing. Residues 153-173 (AIMGLAFTWLMALACAAPPLV) form a helical membrane-spanning segment. Residues 174–202 (GWSRYIPEGMQCSCGIDYYTRAEGFNNES) are Extracellular-facing. The N-linked (GlcNAc...) asparagine glycan is linked to Asn200. Residues 203–224 (FVIYMFICHFSIPLLVVFFCYG) form a helical membrane-spanning segment. Residues 225–252 (RLLCAVKEAAAAQQESETTQRAEREVTR) lie on the Cytoplasmic side of the membrane. A helical transmembrane segment spans residues 253 to 274 (MVIMMVIAFLVCWLPYASVAWW). At 275–286 (IFTHQGSDFGPV) the chain is on the extracellular side. A helical transmembrane segment spans residues 287–308 (FMTIPAFFAKSSSIYNPMIYIC). Lys296 carries the N6-(retinylidene)lysine modification. The Cytoplasmic portion of the chain corresponds to 309–353 (LNKQFRHCMITTLCCGKNPFEEEEGASTASKTEASSVSSSSVSPA). S-palmitoyl cysteine attachment occurs at residues Cys322 and Cys323. Positions 331–353 (EEGASTASKTEASSVSSSSVSPA) are disordered. Low complexity predominate over residues 334–353 (ASTASKTEASSVSSSSVSPA).

It belongs to the G-protein coupled receptor 1 family. Opsin subfamily. Post-translationally, phosphorylated on some or all of the serine and threonine residues present in the C-terminal region. Contains one covalently linked retinal chromophore.

It localises to the membrane. The protein resides in the cell projection. Its subcellular location is the cilium. It is found in the photoreceptor outer segment. Functionally, photoreceptor required for image-forming vision at low light intensity. While most salt water fish species use retinal as chromophore, most freshwater fish use 3-dehydroretinal, or a mixture of retinal and 3-dehydroretinal. Light-induced isomerization of 11-cis to all-trans retinal triggers a conformational change that activates signaling via G-proteins. Subsequent receptor phosphorylation mediates displacement of the bound G-protein alpha subunit by arrestin and terminates signaling. This Diplodus vulgaris (Common two-banded seabream) protein is Rhodopsin (rho).